A 41-amino-acid chain; its full sequence is Putative toxic protein TimP (41 aa).

Residues 1 to 17 (MKIRCFCIVLIVSGALL) are membrane-embedded.

It belongs to the TimP toxin family.

Its subcellular location is the cell inner membrane. Putative toxic component of a potential type I toxin-antitoxin (TA) system. Neutralized by sRNA antitoxin TimR which binds to the 5' UTR of timP mRNA and inhibits translation. The antitoxin gene is encoded immediately upstream and transcribed divergently from the toxin gene; antitoxin RNA is less stable than timP mRNA. This Escherichia coli (strain K12) protein is Putative toxic protein TimP.